The sequence spans 123 residues: cAMP-responsive element-binding protein-like 2 (123 aa).

A disordered region spans residues 1-24; the sequence is MDDSKVVGGKVKKPGKRGRKPAKI. The span at 10–21 shows a compositional bias: basic residues; that stretch reads KVKKPGKRGRKP. Residues 23–86 form the bZIP domain; that stretch reads KIDLKAKLER…MAMDQGKIPS (64 aa). Residues 29–60 are basic motif; the sequence is KLERSRQSARECRARKKLRYQYLEELVSSRER. The leucine-zipper stretch occupies residues 62-69; sequence ICALREEL. Residues 93 to 123 are disordered; sequence TGEEQNKSQQNSSRHPKAGKTDANTNSLVGN. Positions 114–123 are enriched in polar residues; the sequence is DANTNSLVGN.

The protein belongs to the bZIP family. ATF subfamily. In terms of assembly, interacts with CREB1; regulates CREB1 phosphorylation, stability and transcriptional activity. In terms of processing, phosphorylated by AMPK.

The protein resides in the nucleus. In terms of biological role, probable regulator of CREB1 transcriptional activity which is involved in adipose cells differentiation. May also play a regulatory role in the cell cycle. In Rattus norvegicus (Rat), this protein is cAMP-responsive element-binding protein-like 2 (Crebl2).